The following is a 574-amino-acid chain: Zinc finger protein 394 (574 aa).

Ser12 bears the Phosphoserine mark. A Glycyl lysine isopeptide (Lys-Gly) (interchain with G-Cter in SUMO2) cross-link involves residue Lys40. An SCAN box domain is found at 64–146; the sequence is RLHFRQLRYQ…AVVRALQRAL (83 aa). The 76-residue stretch at 155–230 folds into the KRAB domain; that stretch reads VTFEDMAVSL…LQEAFQGKHP (76 aa). The disordered stretch occupies residues 182 to 202; that stretch reads ESAQKDSGSTVPPSLESRVEN. Residues Lys203, Lys228, and Lys254 each participate in a glycyl lysine isopeptide (Lys-Gly) (interchain with G-Cter in SUMO2) cross-link. A disordered region spans residues 231–284; sequence LFSKCGSTHEDRVEKQSGNPLPLKLENSAEAEGLNSISDVNKNGSIEGEDSKNN. Residues 265 to 274 are compositionally biased toward polar residues; it reads NSISDVNKNG. Lys282 participates in a covalent cross-link: Glycyl lysine isopeptide (Lys-Gly) (interchain with G-Cter in SUMO2). 7 C2H2-type zinc fingers span residues 358–380, 386–408, 414–436, 442–463, 469–491, 497–519, and 525–547; these read YKCG…QRIH, YGCQ…QRTH, YTCL…QSTH, FKCE…QRLH, YKCE…HRIH, YGCS…QRIH, and YKCL…QRIH. Lys443 is covalently cross-linked (Glycyl lysine isopeptide (Lys-Gly) (interchain with G-Cter in SUMO2)).

Belongs to the krueppel C2H2-type zinc-finger protein family.

The protein localises to the nucleus. May be involved in transcriptional regulation. In Pongo abelii (Sumatran orangutan), this protein is Zinc finger protein 394 (ZNF394).